Consider the following 287-residue polypeptide: 3-methyl-2-oxobutanoate hydroxymethyltransferase (287 aa).

The Mg(2+) site is built by Asp-67 and Asp-106. 3-methyl-2-oxobutanoate contacts are provided by residues 67–68, Asp-106, and Lys-136; that span reads DS. Glu-138 serves as a coordination point for Mg(2+). The active-site Proton acceptor is Glu-204.

This sequence belongs to the PanB family. In terms of assembly, homodecamer; pentamer of dimers. Requires Mg(2+) as cofactor.

The protein localises to the cytoplasm. The enzyme catalyses 3-methyl-2-oxobutanoate + (6R)-5,10-methylene-5,6,7,8-tetrahydrofolate + H2O = 2-dehydropantoate + (6S)-5,6,7,8-tetrahydrofolate. It participates in cofactor biosynthesis; (R)-pantothenate biosynthesis; (R)-pantoate from 3-methyl-2-oxobutanoate: step 1/2. Its function is as follows. Catalyzes the reversible reaction in which hydroxymethyl group from 5,10-methylenetetrahydrofolate is transferred onto alpha-ketoisovalerate to form ketopantoate. The polypeptide is 3-methyl-2-oxobutanoate hydroxymethyltransferase (Streptomyces avermitilis (strain ATCC 31267 / DSM 46492 / JCM 5070 / NBRC 14893 / NCIMB 12804 / NRRL 8165 / MA-4680)).